Consider the following 156-residue polypeptide: Large ribosomal subunit protein uL22 (156 aa).

This sequence belongs to the universal ribosomal protein uL22 family. Part of the 50S ribosomal subunit.

This protein binds specifically to 23S rRNA. It makes multiple contacts with different domains of the 23S rRNA in the assembled 50S subunit and ribosome. Functionally, the globular domain of the protein is located near the polypeptide exit tunnel on the outside of the subunit, while an extended beta-hairpin is found that lines the wall of the exit tunnel in the center of the 70S ribosome. The chain is Large ribosomal subunit protein uL22 from Halobacterium salinarum (strain ATCC 700922 / JCM 11081 / NRC-1) (Halobacterium halobium).